Consider the following 408-residue polypeptide: MDCAAALLPGFHPNYLLCPSRHFSSLLPKTDLSSPLKFQLQNKQLSLASSHGFSPVICNATLSDTYSETVELADIDWDNLGFGFLPTDYMYNMKCAQGESFSNGELQRFGNIELSPSAGVLNYGQGLFEGLKAYRKEDGNILLFRPEENALRMRLGAERMCMPSPTVDQFVDAVKATVLANKRWIPPVGKGSLYIRPLLMGSGAVLGLAPAPEYTFLIYVSPVGNYFKEGVAPIHLIVEDNLHRATPGGTGGVKTIGNYAAVLKAQSAAKEQGYSDVLYLDCVHKKYLEEVSSCNIFVVKGNLIFTPAIKGTILPGITRKSIIDVARTLGFQVEERLVHVDELLDADEVFCTGTAVVVSPVGSITYHGERVPYNEGGVGAVSQQLYSALTRLQMGFIKDNMNWTVELS.

Residues 1–58 (MDCAAALLPGFHPNYLLCPSRHFSSLLPKTDLSSPLKFQLQNKQLSLASSHGFSPVIC) constitute a chloroplast transit peptide. Arg-152 is a pyridoxal 5'-phosphate binding site. The Proton acceptor role is filled by Lys-254. Lys-254 carries the N6-(pyridoxal phosphate)lysine modification. Glu-290 serves as a coordination point for pyridoxal 5'-phosphate.

Belongs to the class-IV pyridoxal-phosphate-dependent aminotransferase family. Pyridoxal 5'-phosphate serves as cofactor. In terms of tissue distribution, expressed in lupulin glands and leaves.

The protein localises to the plastid. Its subcellular location is the chloroplast. The catalysed reaction is L-isoleucine + 2-oxoglutarate = (S)-3-methyl-2-oxopentanoate + L-glutamate. The enzyme catalyses L-leucine + 2-oxoglutarate = 4-methyl-2-oxopentanoate + L-glutamate. It catalyses the reaction L-valine + 2-oxoglutarate = 3-methyl-2-oxobutanoate + L-glutamate. Its pathway is amino-acid biosynthesis; L-isoleucine biosynthesis; L-isoleucine from 2-oxobutanoate: step 4/4. It participates in amino-acid biosynthesis; L-leucine biosynthesis; L-leucine from 3-methyl-2-oxobutanoate: step 4/4. The protein operates within amino-acid biosynthesis; L-valine biosynthesis; L-valine from pyruvate: step 4/4. In terms of biological role, converts 2-oxo acids to branched-chain amino acids. Shows no kinetic preferences corresponding to anabolic or catabolic functions, but likely involved in BCAA biosynthesis. In Humulus lupulus (European hop), this protein is Branched-chain amino acid aminotransferase 2, chloroplastic.